Consider the following 311-residue polypeptide: Lipid A biosynthesis acyltransferase (311 aa).

Residues 19 to 39 form a helical membrane-spanning segment; the sequence is WLFWLGVAIWRSILCLPYPIL. The HXXXXD motif motif lies at 134–139; it reads HFLTLE.

The protein belongs to the LpxL/LpxM/LpxP family.

It is found in the cell inner membrane. It catalyses the reaction an alpha-Kdo-(2-&gt;4)-alpha-Kdo-(2-&gt;6)-lipid IVA + a fatty acyl-[ACP] = an alpha-Kdo-(2-&gt;4)-alpha-Kdo-(2-&gt;6)-(acyl)-lipid IVA + holo-[ACP]. The protein operates within glycolipid biosynthesis; KDO(2)-lipid A biosynthesis; KDO(2)-lipid A from CMP-3-deoxy-D-manno-octulosonate and lipid IV(A): step 3/4. It participates in bacterial outer membrane biogenesis; lipopolysaccharide biosynthesis. Its function is as follows. Catalyzes the transfer of an acyl chain from an acyl-[acyl-carrier-protein] (ACP) to a Kdo(2)-lipid IV(A) to form a Kdo(2)-(acyl)-lipid IV(A). The chain is Lipid A biosynthesis acyltransferase from Haemophilus influenzae (strain ATCC 51907 / DSM 11121 / KW20 / Rd).